Consider the following 682-residue polypeptide: Acyl-CoA synthetase short-chain family member 3, mitochondrial (682 aa).

The N-terminal 29 residues, 1–29 (MKPSWLQCRKVTGAGTLGAPLPGSPSVRG), are a transit peptide targeting the mitochondrion. 222-225 (EPGR) contacts CoA. ATP is bound by residues 420–422 (GER) and 441–446 (DHWWQT). Lys-513 carries the post-translational modification N6-succinyllysine. N6-acetyllysine is present on Lys-519. Residues Asp-534, Arg-549, and Arg-560 each coordinate ATP. Arg-619 contacts CoA.

The protein belongs to the ATP-dependent AMP-binding enzyme family.

It localises to the mitochondrion matrix. It catalyses the reaction acetate + ATP + CoA = acetyl-CoA + AMP + diphosphate. The catalysed reaction is propanoate + ATP + CoA = propanoyl-CoA + AMP + diphosphate. It carries out the reaction butanoate + ATP + CoA = butanoyl-CoA + AMP + diphosphate. Its function is as follows. Catalyzes the synthesis of acetyl-CoA from short-chain fatty acids. Propionate is the preferred substrate but can also utilize acetate and butyrate with a much lower affinity. This Mus musculus (Mouse) protein is Acyl-CoA synthetase short-chain family member 3, mitochondrial (Acss3).